The chain runs to 391 residues: Phosphoglycerate kinase (391 aa).

Residues 23–25 (DFN), Arg-38, 61–64 (HLGK), Arg-117, and Arg-150 contribute to the substrate site. ATP-binding positions include Lys-201, Gly-291, Glu-322, and 348–351 (GGDS).

This sequence belongs to the phosphoglycerate kinase family. As to quaternary structure, monomer.

It is found in the cytoplasm. It catalyses the reaction (2R)-3-phosphoglycerate + ATP = (2R)-3-phospho-glyceroyl phosphate + ADP. The protein operates within carbohydrate degradation; glycolysis; pyruvate from D-glyceraldehyde 3-phosphate: step 2/5. In Clostridium beijerinckii (strain ATCC 51743 / NCIMB 8052) (Clostridium acetobutylicum), this protein is Phosphoglycerate kinase.